Consider the following 466-residue polypeptide: MKTVSIFDIYLNKIKLNSKINIQGWVRNRRRSKLGLLFIDLYDGSCLYTMQVVVKDILSNYDSEISKLSVGCSINVFGVLISSIGTKQKYEIQAKVVKVIGIINNPGSYPISSKYHTMKHLRNVPHLRSRTNFFGAVSRVRNYLFNALHEFLFKNGYYWIPSPIITGLNSEGAGDMFKVSILDLNNIPKNKNGKINFKKDFFGKEAFLTVSGQLTLETYACSLSKVYSFGPIFRAENSNTRRHLSEFWMLEVETAFSNLCDIIKFSENMLKYAIGIILDKCVIDINFFRENVDEKIFCRLKDFSSKQFFQIEYKEAINILIKSNRFDHKVMFIGMELSSDHERFLVEEYFKFPLVITNYPKSLKAFYMRVNDDNKTVSAMDVLVPGVGEIIGGSEREERLNVLDRRFFELNLNKEDYWWYRDLRKYGTIPHSGFGLGFERLLSYILGIKNIRDVCPFPRTAYKADF.

Belongs to the class-II aminoacyl-tRNA synthetase family. Homodimer.

The protein localises to the cytoplasm. The catalysed reaction is tRNA(Asn) + L-asparagine + ATP = L-asparaginyl-tRNA(Asn) + AMP + diphosphate + H(+). The chain is Asparagine--tRNA ligase from Buchnera aphidicola subsp. Baizongia pistaciae (strain Bp).